We begin with the raw amino-acid sequence, 399 residues long: MTLAVAVAPLEKTPLETYVPPAKPSLIGLSRAELAERLGAIGVAPAQRKMRAQQLWHWMYVRGARDFAEMTNVSKEMRATLAEHCTVDRPEVVAEQISADGTRKWLLRLPSGDDVQKAHEVECVYIPETDRGTLCVSSQVGCTLNCSFCHTGTQRLVRNLTAGEIVGQVMVARDRLGDWIDRETPNGNRLVTNVVMMGMGEPLYNFEAVRDALLIVTDNEGIGISRRRVTLSTSGVVPNIARTGDEIGVMLAISLHAVRDELRDELVPLNRKYPLKELLQACRDYPGASNARRITFEYVMLKGVNDSLDDARRLVQLLKGIPAKINLIPFNPWPGSKYECSDWDQIEKFSEYVFNAGYSSPVRTPRGRDILAACGQLKSETEKLSVRERDALRAMAMTD.

Glutamate 122 acts as the Proton acceptor in catalysis. In terms of domain architecture, Radical SAM core spans 128 to 371 (ETDRGTLCVS…VRTPRGRDIL (244 aa)). The cysteines at positions 135 and 374 are disulfide-linked. 3 residues coordinate [4Fe-4S] cluster: cysteine 142, cysteine 146, and cysteine 149. S-adenosyl-L-methionine is bound by residues 200–201 (GE), serine 232, 254–256 (SLH), and asparagine 331. The active-site S-methylcysteine intermediate is cysteine 374.

This sequence belongs to the radical SAM superfamily. RlmN family. [4Fe-4S] cluster is required as a cofactor.

The protein resides in the cytoplasm. The enzyme catalyses adenosine(2503) in 23S rRNA + 2 reduced [2Fe-2S]-[ferredoxin] + 2 S-adenosyl-L-methionine = 2-methyladenosine(2503) in 23S rRNA + 5'-deoxyadenosine + L-methionine + 2 oxidized [2Fe-2S]-[ferredoxin] + S-adenosyl-L-homocysteine. It catalyses the reaction adenosine(37) in tRNA + 2 reduced [2Fe-2S]-[ferredoxin] + 2 S-adenosyl-L-methionine = 2-methyladenosine(37) in tRNA + 5'-deoxyadenosine + L-methionine + 2 oxidized [2Fe-2S]-[ferredoxin] + S-adenosyl-L-homocysteine. In terms of biological role, specifically methylates position 2 of adenine 2503 in 23S rRNA and position 2 of adenine 37 in tRNAs. m2A2503 modification seems to play a crucial role in the proofreading step occurring at the peptidyl transferase center and thus would serve to optimize ribosomal fidelity. This Rhodopseudomonas palustris (strain HaA2) protein is Dual-specificity RNA methyltransferase RlmN.